Consider the following 674-residue polypeptide: Acetyl-coenzyme A synthetase (674 aa).

CoA-binding positions include 201 to 204 (RGGR) and T320. ATP contacts are provided by residues 396–398 (GEP), 420–425 (DTYWQT), D518, and R533. S541 provides a ligand contact to CoA. R544 is an ATP binding site. Residue R603 coordinates CoA.

This sequence belongs to the ATP-dependent AMP-binding enzyme family.

It carries out the reaction acetate + ATP + CoA = acetyl-CoA + AMP + diphosphate. The sequence is that of Acetyl-coenzyme A synthetase (acsA) from Dictyostelium discoideum (Social amoeba).